A 200-amino-acid polypeptide reads, in one-letter code: Large ribosomal subunit protein uL4 (200 aa).

Positions 42 to 65 (TRAHKSRADVSGGGKKPFRQKGTG) are disordered.

The protein belongs to the universal ribosomal protein uL4 family. In terms of assembly, part of the 50S ribosomal subunit.

Functionally, one of the primary rRNA binding proteins, this protein initially binds near the 5'-end of the 23S rRNA. It is important during the early stages of 50S assembly. It makes multiple contacts with different domains of the 23S rRNA in the assembled 50S subunit and ribosome. Forms part of the polypeptide exit tunnel. This Acinetobacter baumannii (strain AB307-0294) protein is Large ribosomal subunit protein uL4.